Consider the following 65-residue polypeptide: MRVVLRLPERKEVEVKGNRPLREVLEELGLNPETVVAVRGEELLTLEDEVREEDTLEVLSAISGG.

Glycine 65 is subject to 1-thioglycine; alternate. Glycine 65 is subject to Glycyl adenylate; alternate. Residue glycine 65 forms a Glycyl cysteine thioester (Gly-Cys) (interchain with C-192 in TtuC); alternate linkage. Glycine 65 is covalently cross-linked (Glycyl lysine isopeptide (Gly-Lys) (interchain with K-? in acceptor proteins); alternate).

This sequence belongs to the TtuB family. In terms of assembly, is able to form a heterocomplex with TtuA. In terms of processing, the C-terminal glycine residue of TtuB is first activated by TtuC as an acyl-adenylate (TtuB-COAMP), and then converted to the thiocarboxylate form (TtuB-COSH) by the cysteine desulfurases IscS or SufS.

It functions in the pathway tRNA modification. Its function is as follows. Required for the 2-thiolation of 5-methyluridine residue at position 54 in the T loop of tRNAs, leading to 5-methyl-2-thiouridine (m(5)s(2)U or s(2)T). This modification allows thermal stabilization of tRNAs in thermophilic microorganisms, and is essential for cell growth at high temperatures. Thiocarboxylated TtuB functions as the sulfur donor in the sulfurtransferase reaction catalyzed by TtuA. TtuB also functions as a protein modifier covalently attached to lysine residues of the target proteins TtuA and TtuC. TtuB conjugation might play a regulatory role to ensure appropriate sulfur transfer in cells. This chain is Sulfur carrier protein TtuB, found in Thermus thermophilus (strain ATCC BAA-163 / DSM 7039 / HB27).